The following is a 309-amino-acid chain: Thiamine-monophosphate kinase (309 aa).

Residues Asp25, Thr39, Ser40, and Asp41 each coordinate Mg(2+). Asp48 provides a ligand contact to substrate. The Mg(2+) site is built by Asp69 and Asp117. ATP contacts are provided by residues 116–117 (GD) and Arg140. Asp201 contacts Mg(2+). Ser203 contacts ATP. Asp204 contributes to the Mg(2+) binding site. Residues Glu250 and Trp298 each coordinate substrate.

Belongs to the thiamine-monophosphate kinase family.

The enzyme catalyses thiamine phosphate + ATP = thiamine diphosphate + ADP. Its pathway is cofactor biosynthesis; thiamine diphosphate biosynthesis; thiamine diphosphate from thiamine phosphate: step 1/1. Catalyzes the ATP-dependent phosphorylation of thiamine-monophosphate (TMP) to form thiamine-pyrophosphate (TPP), the active form of vitamin B1. The polypeptide is Thiamine-monophosphate kinase (Pyrococcus horikoshii (strain ATCC 700860 / DSM 12428 / JCM 9974 / NBRC 100139 / OT-3)).